The primary structure comprises 297 residues: N-acetylneuraminate lyase (297 aa).

Positions 47 and 48 each coordinate aceneuramate. The Proton donor role is filled by Tyr-137. Lys-165 (schiff-base intermediate with substrate) is an active-site residue. The aceneuramate site is built by Thr-167, Gly-189, Asp-191, Glu-192, and Ser-208.

It belongs to the DapA family. NanA subfamily. As to quaternary structure, homotetramer.

The protein localises to the cytoplasm. The enzyme catalyses aceneuramate = aldehydo-N-acetyl-D-mannosamine + pyruvate. The protein operates within amino-sugar metabolism; N-acetylneuraminate degradation; D-fructose 6-phosphate from N-acetylneuraminate: step 1/5. Functionally, catalyzes the reversible aldol cleavage of N-acetylneuraminic acid (sialic acid; Neu5Ac) to form pyruvate and N-acetylmannosamine (ManNAc) via a Schiff base intermediate. The polypeptide is N-acetylneuraminate lyase (Escherichia coli (strain SMS-3-5 / SECEC)).